Here is a 106-residue protein sequence, read N- to C-terminus: Large ribosomal subunit protein uL24 (106 aa).

The protein belongs to the universal ribosomal protein uL24 family. As to quaternary structure, part of the 50S ribosomal subunit.

Its function is as follows. One of two assembly initiator proteins, it binds directly to the 5'-end of the 23S rRNA, where it nucleates assembly of the 50S subunit. In terms of biological role, one of the proteins that surrounds the polypeptide exit tunnel on the outside of the subunit. This Desulforudis audaxviator (strain MP104C) protein is Large ribosomal subunit protein uL24.